A 450-amino-acid chain; its full sequence is 3',5'-cyclic-AMP phosphodiesterase 7B (450 aa).

One can recognise a PDEase domain in the interval 97–420 (LDEDYLGQAR…AQWKSLLPRQ (324 aa)). The active-site Proton donor is His173. 4 residues coordinate a divalent metal cation: His177, His213, Asp214, and Asp323. The tract at residues 418–450 (PRQHRSRGSSGSGPDHDHAGQGTESEEQEGDSP) is disordered. Phosphoserine is present on Ser426. Positions 441–450 (ESEEQEGDSP) are enriched in acidic residues.

The protein belongs to the cyclic nucleotide phosphodiesterase family. PDE7 subfamily. The cofactor is a divalent metal cation. In terms of tissue distribution, highly expressed in brain. Also expressed in heart, liver, skeletal muscle and pancreas.

The enzyme catalyses 3',5'-cyclic AMP + H2O = AMP + H(+). The protein operates within purine metabolism; 3',5'-cyclic AMP degradation; AMP from 3',5'-cyclic AMP: step 1/1. With respect to regulation, inhibited by dipyridamole, IBMX and SCH 51866. Insensitive to zaprinast, rolipram, and milrinone. Functionally, hydrolyzes the second messenger cAMP, which is a key regulator of many important physiological processes. May be involved in the control of cAMP-mediated neural activity and cAMP metabolism in the brain. In Homo sapiens (Human), this protein is 3',5'-cyclic-AMP phosphodiesterase 7B.